The primary structure comprises 221 residues: Uracil-DNA glycosylase 1 (221 aa).

The active-site Proton acceptor is Asp-61.

The protein belongs to the uracil-DNA glycosylase (UDG) superfamily. UNG family.

The protein resides in the cytoplasm. The catalysed reaction is Hydrolyzes single-stranded DNA or mismatched double-stranded DNA and polynucleotides, releasing free uracil.. In terms of biological role, excises uracil residues from the DNA which can arise as a result of misincorporation of dUMP residues by DNA polymerase or due to deamination of cytosine. This chain is Uracil-DNA glycosylase 1, found in Listeria monocytogenes serovar 1/2a (strain ATCC BAA-679 / EGD-e).